Reading from the N-terminus, the 425-residue chain is Cysteate synthase (425 aa).

Residue Lys106 is modified to N6-(pyridoxal phosphate)lysine. Pyridoxal 5'-phosphate-binding residues include Asn132 and Thr382.

The protein belongs to the threonine synthase family. Cysteate synthase subfamily. Homotrimer. Requires pyridoxal 5'-phosphate as cofactor.

It carries out the reaction O-phospho-L-serine + sulfite + H(+) = L-cysteate + phosphate. Its pathway is cofactor biosynthesis; coenzyme M biosynthesis. Specifically catalyzes the beta-elimination of phosphate from L-phosphoserine and the beta-addition of sulfite to the dehydroalanine intermediate to produce L-cysteate. The chain is Cysteate synthase from Methanosphaerula palustris (strain ATCC BAA-1556 / DSM 19958 / E1-9c).